The following is a 453-amino-acid chain: GTPase Der (453 aa).

2 consecutive EngA-type G domains span residues 3–178 (PKIA…PNNE) and 190–363 (LKLA…LECS). Residues 9-16 (GRPNVGKS), 57-61 (DTGGV), 130-133 (NKVD), 196-203 (GRPNAGKS), 243-247 (DTAGI), and 308-311 (NKTD) each bind GTP. The KH-like domain maps to 364–448 (TRINTGVLNR…PIRIRLRSSH (85 aa)).

It belongs to the TRAFAC class TrmE-Era-EngA-EngB-Septin-like GTPase superfamily. EngA (Der) GTPase family. Associates with the 50S ribosomal subunit.

Functionally, GTPase that plays an essential role in the late steps of ribosome biogenesis. This Lawsonia intracellularis (strain PHE/MN1-00) protein is GTPase Der.